We begin with the raw amino-acid sequence, 204 residues long: Small ribosomal subunit protein uS4 (204 aa).

Residues 25–47 (SPVNKREYGPGQHGQRRKKPSDY) form a disordered region. Residues 93 to 156 (RRLDAVVYRM…KQFAFVMEAA (64 aa)) form the S4 RNA-binding domain.

The protein belongs to the universal ribosomal protein uS4 family. As to quaternary structure, part of the 30S ribosomal subunit. Contacts protein S5. The interaction surface between S4 and S5 is involved in control of translational fidelity.

Its function is as follows. One of the primary rRNA binding proteins, it binds directly to 16S rRNA where it nucleates assembly of the body of the 30S subunit. Functionally, with S5 and S12 plays an important role in translational accuracy. In Rhodospirillum centenum (strain ATCC 51521 / SW), this protein is Small ribosomal subunit protein uS4.